The following is a 315-amino-acid chain: Transcription factor MafAa (315 aa).

Low complexity predominate over residues 52 to 104 (STPISTPCSSVPSSPSFCAPSPGSQPGQNLVNGVNNNNNNSGNGNNNTQGSSG). Disordered stretches follow at residues 52 to 108 (STPI…KPQM) and 169 to 191 (ATNG…AHAR). A compositionally biased stretch (basic residues) spans 172–189 (GHHHPVHHHHHHHGHHAH). The segment at 223-248 (RLKQKRRTLKNRGYAQSCRYKRVQQR) is basic motif. The bZIP domain occupies 223–286 (RLKQKRRTLK…DLYKEKYEKL (64 aa)). Positions 229–243 (RTLKNRGYAQSCRYK) are interaction with DNA. The tract at residues 251 to 272 (LESEKCTLQSQVEQLKQDVARL) is leucine-zipper. Positions 290-315 (AFNGGGNTRDPSSGNHVKTTSTDFFM) are disordered. The span at 298–315 (RDPSSGNHVKTTSTDFFM) shows a compositional bias: polar residues.

This sequence belongs to the bZIP family. Maf subfamily.

It localises to the nucleus. Its function is as follows. Transcription factor, possibly involved in transcription regulation during lens development, including that of crystallin genes. Specifically binds to the alphaCE2 enhancer element of crystallin gene. In Danio rerio (Zebrafish), this protein is Transcription factor MafAa (mafaa).